The sequence spans 727 residues: YTH domain-containing protein 1 (727 aa).

Over residues 1–12 (MAADSREEKDGE) the composition is skewed to basic and acidic residues. Positions 1-338 (MAADSREEKD…KHEKLSSSVR (338 aa)) are disordered. Serine 35 bears the Phosphoserine mark. Residues 50–59 (DRMESTDTKR) show a composition bias toward basic and acidic residues. Polar residues predominate over residues 63–90 (SVHSRQLVSKPLSSSVSNNKRIVSTKGK). A compositionally biased stretch (basic and acidic residues) spans 91–115 (SATEYKNEEYQRSERNKRLDADRKI). Lysine 96 participates in a covalent cross-link: Glycyl lysine isopeptide (Lys-Gly) (interchain with G-Cter in SUMO2). Residues serine 118 and serine 120 each carry the phosphoserine modification. Basic and acidic residues predominate over residues 124–144 (EPYKNQPEKTCVRKRDPERRA). Serine 146 carries the post-translational modification Phosphoserine. The residue at position 148 (threonine 148) is a Phosphothreonine. Basic and acidic residues-rich tracts occupy residues 151 to 163 (GSER…DRRA) and 170 to 185 (SKEE…DHET). Residues 199–254 (ENEEEGVEEDVEEDEEVEEDAEEDEEVDEDGEEEEEEEEEEEEEEEEEEEEYEQDE) show a composition bias toward acidic residues. Basic and acidic residues predominate over residues 255 to 270 (RDQKEEGNDYDTRSEA). Polar residues predominate over residues 280-289 (FTDGSVRSGS). A phosphoserine mark is found at serine 308, serine 315, serine 317, serine 318, and serine 320. The span at 315-325 (SGSSASESYAG) shows a compositional bias: low complexity. The YTH domain maps to 355–492 (ARFFLIKSNN…ECGTQLCLLF (138 aa)). Residues 361–363 (KSN) and 377–378 (WS) contribute to the RNA site. Serine 424 is subject to Phosphoserine. RNA is bound at residue tryptophan 428. Serine 435 is subject to Phosphoserine. Aspartate 476 contributes to the RNA binding site. Basic residues predominate over residues 508 to 523 (RHKRRMHSQPRSRGRP). Disordered stretches follow at residues 508 to 564 (RHKR…PGYL), 607 to 643 (GMPP…HPVP), and 669 to 727 (AVVS…RYRR). The span at 524 to 564 (SRREPVRDVGRRRPEDYDIHNSRKKPRIDYPPEFHQRPGYL) shows a compositional bias: basic and acidic residues. The residue at position 545 (serine 545) is a Phosphoserine. Basic and acidic residues predominate over residues 679-727 (RERDRERERDRPRDNRRDRERDRGRDRERERERLCDRDRDRGERGRYRR).

Interacts with SRSF1. Interacts with SRSF2. Interacts with SRSF3. Interacts with SRSF7. Interacts with SRSF10. Interacts with CPSF6. Interacts with KHDRBS1/SAM68. Interacts with TRA2B. Interacts with KHDRBS3. Interacts with EMD. Interacts with RBMX. Interacts with ZCCHC8. In terms of processing, tyrosine phosphorylated.

It is found in the nucleus. The protein resides in the nucleus speckle. Functionally, regulator of alternative splicing that specifically recognizes and binds N6-methyladenosine (m6A)-containing RNAs. M6A is a modification present at internal sites of mRNAs and some non-coding RNAs and plays a role in the efficiency of mRNA splicing, processing and stability. Acts as a key regulator of exon-inclusion or exon-skipping during alternative splicing via interaction with mRNA splicing factors SRSF3 and SRSF10. Specifically binds m6A-containing mRNAs and promotes recruitment of SRSF3 to its mRNA-binding elements adjacent to m6A sites, leading to exon-inclusion during alternative splicing. In contrast, interaction with SRSF3 prevents interaction with SRSF10, a splicing factor that promotes exon skipping: this prevents SRSF10 from binding to its mRNA-binding sites close to m6A-containing regions, leading to inhibit exon skipping during alternative splicing. May also regulate alternative splice site selection. Also involved in nuclear export of m6A-containing mRNAs via interaction with SRSF3: interaction with SRSF3 facilitates m6A-containing mRNA-binding to both SRSF3 and NXF1, promoting mRNA nuclear export. Involved in S-adenosyl-L-methionine homeostasis by regulating expression of MAT2A transcripts, probably by binding m6A-containing MAT2A mRNAs. Also recognizes and binds m6A on other RNA molecules. Involved in random X inactivation mediated by Xist RNA: recognizes and binds m6A-containing Xist and promotes transcription repression activity of Xist. Also recognizes and binds m6A-containing single-stranded DNA. Involved in germline development: required for spermatogonial development in males and oocyte growth and maturation in females, probably via its role in alternative splicing. In Homo sapiens (Human), this protein is YTH domain-containing protein 1.